Consider the following 770-residue polypeptide: Transferrin receptor protein 1 (770 aa).

At 1–70 (MMDQARSAFS…KPKRCNGFIC (70 aa)) the chain is on the cytoplasmic side. Residues 1-70 (MMDQARSAFS…KPKRCNGFIC (70 aa)) are mediates interaction with SH3BP4. Phosphoserine is present on residues S10 and S19. Y20 is subject to Phosphotyrosine. Positions 20 to 23 (YTRF) match the Endocytosis signal motif. Phosphothreonine is present on T21. Phosphoserine is present on S24. Residues 61-64 (KPKR) carry the Stop-transfer sequence motif. Residues C65 and C70 are each lipidated (S-palmitoyl cysteine). A helical; Signal-anchor for type II membrane protein membrane pass occupies residues 71–90 (YGTIAVVLFFLIGFMIGYLG). The Extracellular portion of the chain corresponds to 91 to 770 (YCKRVEPKAG…GDIWDIDNEF (680 aa)). Residues 102–122 (ERPTGTEALGTERTEPSETEE) are disordered. O-linked (GalNAc...) threonine glycosylation occurs at T107. Residues 233–323 (SKATTVTGRL…GTGDPYTPGF (91 aa)) form the PA domain. 3 N-linked (GlcNAc...) asparagine glycosylation sites follow: N261, N327, and N384. The ligand-binding stretch occupies residues 579–770 (TMDLYENLNQ…GDIWDIDNEF (192 aa)). Residues 656 to 658 (RGD) carry the Cell attachment site motif. N-linked (GlcNAc...) asparagine glycosylation is found at N732 and N737.

It belongs to the peptidase M28 family. M28B subfamily. As to quaternary structure, homodimer; disulfide-linked. Binds one transferrin molecule per subunit. Interacts with SH3BP4. Interacts with STEAP3; facilitates TFRC endocytosis in erythroid precursor cells. In terms of processing, stearoylated by ZDHHC6 which inhibits TFRC-mediated activation of the JNK pathway and promotes mitochondrial fragmentation. Stearoylation does not affect iron uptake. Post-translationally, N- and O-glycosylated, phosphorylated and palmitoylated.

The protein resides in the cell membrane. It localises to the melanosome. Its function is as follows. Cellular uptake of iron occurs via receptor-mediated endocytosis of ligand-occupied transferrin receptor into specialized endosomes. Endosomal acidification leads to iron release. The apotransferrin-receptor complex is then recycled to the cell surface with a return to neutral pH and the concomitant loss of affinity of apotransferrin for its receptor. Transferrin receptor is necessary for development of erythrocytes and the nervous system. Positively regulates T and B cell proliferation through iron uptake. Acts as a lipid sensor that regulates mitochondrial fusion by regulating activation of the JNK pathway. When dietary levels of stearate (C18:0) are low, promotes activation of the JNK pathway, resulting in HUWE1-mediated ubiquitination and subsequent degradation of the mitofusin MFN2 and inhibition of mitochondrial fusion. When dietary levels of stearate (C18:0) are high, TFRC stearoylation inhibits activation of the JNK pathway and thus degradation of the mitofusin MFN2. Mediates uptake of NICOL1 into fibroblasts where it may regulate extracellular matrix production. The polypeptide is Transferrin receptor protein 1 (TFRC) (Canis lupus familiaris (Dog)).